We begin with the raw amino-acid sequence, 240 residues long: Eukaryotic translation initiation factor 3 subunit J (240 aa).

The segment at 19 to 95 (KADVNKWAGE…FANMTPEQQL (77 aa)) is disordered. The span at 28–45 (EDEDDVKDNWEDDDEEEE) shows a compositional bias: acidic residues. Residues 46 to 56 (KKDAPKQEDTP) show a composition bias toward basic and acidic residues. Residues 60–71 (AKPKKAAQQKKL) are compositionally biased toward basic residues. Coiled-coil stretches lie at residues 63-90 (KKAA…ANMT) and 176-235 (SNNI…DYDD). Over residues 72 to 81 (KKEDLERLQR) the composition is skewed to basic and acidic residues.

Belongs to the eIF-3 subunit J family. Component of the eukaryotic translation initiation factor 3 (eIF-3) complex.

The protein resides in the cytoplasm. Its function is as follows. Component of the eukaryotic translation initiation factor 3 (eIF-3) complex, which is involved in protein synthesis of a specialized repertoire of mRNAs and, together with other initiation factors, stimulates binding of mRNA and methionyl-tRNAi to the 40S ribosome. The eIF-3 complex specifically targets and initiates translation of a subset of mRNAs involved in cell proliferation. This is Eukaryotic translation initiation factor 3 subunit J from Anopheles gambiae (African malaria mosquito).